Here is a 2171-residue protein sequence, read N- to C-terminus: Voltage-dependent L-type calcium channel subunit alpha-1C (2171 aa).

The Cytoplasmic portion of the chain corresponds to 1 to 154 (MLRALVQPAT…RACISIVEWK (154 aa)). The interval 77 to 98 (GAALSWQAAIDAARQAKLMGSA) is calmodulin-binding. The interval 103-128 (ISTVSSTQRKRQQYGKPKKQGSTTAT) is disordered. Basic residues predominate over residues 110–121 (QRKRQQYGKPKK). Residues 141–438 (NPIRRACISI…LVLGVLSGEF (298 aa)) form an I repeat. A helical transmembrane segment spans residues 155–173 (PFEIIILLTIFANCVALAI). The Extracellular portion of the chain corresponds to 174–188 (YIPFPEDDSNATNSN). Asn-183 carries N-linked (GlcNAc...) asparagine glycosylation. The chain crosses the membrane as a helical span at residues 189-209 (LERVEYLFLIIFTVEAFLKVI). Residues 210–218 (AYGLLFHPN) lie on the Cytoplasmic side of the membrane. The chain crosses the membrane as a helical span at residues 219–239 (AYLRNGWNLLDFIIVVVGLFS). Topologically, residues 240–262 (AILEQATKADGANALGGKGAGFD) are extracellular. A helical membrane pass occupies residues 263–281 (VKALRAFRVLRPLRLVSGV). The Cytoplasmic portion of the chain corresponds to 282–298 (PSLQVVLNSIIKAMVPL). Residues 299–320 (LHIALLVLFVIIIYAIIGLELF) form a helical membrane-spanning segment. Residues 321–380 (MGKMHKTCYNQEGVADVPAEDDPSPCALETGHGRQCQNGTVCKPGWDGPKHGITNFDNFA) lie on the Extracellular side of the membrane. Disulfide bonds link Cys-328–Cys-356 and Cys-346–Cys-362. Residue Asn-358 is glycosylated (N-linked (GlcNAc...) asparagine). The pore-forming intramembrane region spans 381-402 (FAMLTVFQCITMEGWTDVLYWM). Positions 391–394 (TMEG) match the Selectivity filter of repeat I motif. Glu-393 serves as a coordination point for Ca(2+). Residues 403 to 410 (QDAMGYEL) are Extracellular-facing. Residues 411 to 431 (PWVYFVSLVIFGSFFVLNLVL) traverse the membrane as a helical segment. Residues 432-554 (GVLSGEFSKE…RKCRAAVKSN (123 aa)) are Cytoplasmic-facing. The segment at 458 to 475 (QQLEEDLKGYLDWITQAE) is AID/alpha-interaction domain; mediates interaction with the beta subunit. A disordered region spans residues 479–511 (PENEDEGMDEEKPRNMSMPTSETESVNTENVAG). Polar residues predominate over residues 495 to 508 (SMPTSETESVNTEN). Ser-499 carries the post-translational modification Phosphoserine. Thr-506 is subject to Phosphothreonine. Residues 540-786 (NRFCRRKCRA…VFLAIAVDNL (247 aa)) form an II repeat. The chain crosses the membrane as a helical span at residues 555-573 (VFYWLVIFLVFLNTLTIAS). At 574–584 (EHYNQPHWLTE) the chain is on the extracellular side. A helical transmembrane segment spans residues 585-605 (VQDTANKALLALFTAEMLLKM). The Cytoplasmic portion of the chain corresponds to 606–616 (YSLGLQAYFVS). The chain crosses the membrane as a helical span at residues 617–636 (LFNRFDCFIVCGGILETILV). Topologically, residues 637–645 (ETKVMSPLG) are extracellular. A helical membrane pass occupies residues 646 to 664 (ISVLRCVRLLRIFKITRYW). The Cytoplasmic portion of the chain corresponds to 665 to 683 (NSLSNLVASLLNSVRSIAS). A helical membrane pass occupies residues 684-703 (LLLLLFLFIIIFSLLGMQLF). Topologically, residues 704–723 (GGKFNFDEMQTRRSTFDNFP) are extracellular. An intramembrane region (pore-forming) is located at residues 724–745 (QSLLTVFQILTGEDWNSVMYDG). The Selectivity filter of repeat II motif lies at 734–737 (TGED). Residue Glu-736 coordinates Ca(2+). Residues 746 to 755 (IMAYGGPSFP) lie on the Extracellular side of the membrane. A helical transmembrane segment spans residues 756-775 (GMLVCIYFIILFICGNYILL). Over 776 to 930 (NVFLAIAVDN…LQCHRIVNDT (155 aa)) the chain is Cytoplasmic. The disordered stretch occupies residues 794 to 891 (SAQKEEEEEK…EMPVGPRPRP (98 aa)). Over residues 813–836 (SPEKKQEVVGKPALEEAKEEKIEL) the composition is skewed to basic and acidic residues. Residues Ser-838 and Ser-845 each carry the phosphoserine modification. The segment at 859-906 (NESEDKSPYPNPETTGEEDEEEPEMPVGPRPRPLSELHLKEKAVPMPE) is interaction with STAC2. Over residues 873–882 (TGEEDEEEPE) the composition is skewed to acidic residues. The III repeat unit spans residues 917 to 1199 (NRFRLQCHRI…IFVGFVIVTF (283 aa)). Residues 931–949 (IFTNLILFFILLSSISLAA) form a helical membrane-spanning segment. The Extracellular segment spans residues 950 to 961 (EDPVQHTSFRNH). The helical transmembrane segment at 962–981 (ILFYFDIVFTTIFTIEIALK) threads the bilayer. Residues 982–997 (MTAYGAFLHKGSFCRN) are Cytoplasmic-facing. The chain crosses the membrane as a helical span at residues 998–1016 (YFNILDLLVVSVSLISFGI). At 1017–1023 (QSSAINV) the chain is on the extracellular side. The chain crosses the membrane as a helical span at residues 1024 to 1042 (VKILRVLRVLRPLRAINRA). The Cytoplasmic segment spans residues 1043-1061 (KGLKHVVQCVFVAIRTIGN). Residues 1062–1081 (IVIVTTLLQFMFACIGVQLF) form a helical membrane-spanning segment. At 1082 to 1131 (KGKLYTCSDSSKQTEAECKGNYITYKDGEVDHPIIQPRSWENSKFDFDNV) the chain is on the extracellular side. Cys-1088 and Cys-1099 form a disulfide bridge. The interval 1119-1208 (RSWENSKFDF…FQEQGEQEYK (90 aa)) is dihydropyridine binding. Positions 1132–1152 (LAAMMALFTVSTFEGWPELLY) form an intramembrane region, pore-forming. Residues 1143-1146 (TFEG) carry the Selectivity filter of repeat III motif. Glu-1145 contributes to the Ca(2+) binding site. Topologically, residues 1153-1169 (RSIDSHTEDKGPIYNYR) are extracellular. Residues 1170-1191 (VEISIFFIIYIIIIAFFMMNIF) form a helical membrane-spanning segment. The Cytoplasmic portion of the chain corresponds to 1192-1249 (VGFVIVTFQEQGEQEYKNCELDKNQRQCVEYALKARPLRRYIPKNQHQYKVWYVVNST). The IV repeat unit spans residues 1236–1509 (NQHQYKVWYV…LFVAVIMDNF (274 aa)). A helical membrane pass occupies residues 1250–1271 (YFEYLMFVLILLNTICLAMQHY). Over 1272–1279 (GQSCLFKI) the chain is Extracellular. A helical membrane pass occupies residues 1280–1301 (AMNILNMLFTGLFTVEMILKLI). Topologically, residues 1302–1311 (AFKPKGYFSD) are cytoplasmic. Residues 1312–1331 (PWNVFDFLIVIGSIIDVILS) traverse the membrane as a helical segment. The Extracellular segment spans residues 1332–1354 (ETNPAEHTQCSPSMNAEENSRIS). Residues 1355-1373 (ITFFRLFRVMRLVKLLSRG) form a helical membrane-spanning segment. The Cytoplasmic segment spans residues 1374-1391 (EGIRTLLWTFIKSFQALP). A helical membrane pass occupies residues 1392–1412 (YVALLIVMLFFIYAVIGMQVF). At 1413–1434 (GKIALNDTTEINRNNNFQTFPQ) the chain is on the extracellular side. Asn-1418 is a glycosylation site (N-linked (GlcNAc...) asparagine). Residues 1435–1453 (AVLLLFRCATGEAWQDIML) constitute an intramembrane region (pore-forming). Residues 1444 to 1447 (TGEA) carry the Selectivity filter of repeat IV motif. The Extracellular segment spans residues 1454–1481 (ACMPGKKCAPESEPHNSTEGETPCGSSF). Residues 1460 to 1528 (KCAPESEPHN…LGPHHLDEFK (69 aa)) form a dihydropyridine binding region. A disulfide bridge connects residues Cys-1461 and Cys-1477. Asn-1469 carries an N-linked (GlcNAc...) asparagine glycan. Positions 1474 to 1516 (ETPCGSSFAVFYFISFYMLCAFLIINLFVAVIMDNFDYLTRDW) are phenylalkylamine binding. The chain crosses the membrane as a helical span at residues 1482 to 1506 (AVFYFISFYMLCAFLIINLFVAVIM). Topologically, residues 1507–2171 (DNFDYLTRDW…ADRRAGVSSL (665 aa)) are cytoplasmic. Positions 1641 to 1668 (DEVTVGKFYATFLIQEYFRKFKKRKEQG) are important for interaction with STAC1, STAC2 and STAC3. Positions 1647–1667 (KFYATFLIQEYFRKFKKRKEQ) are calmodulin-binding IQ region. An important for localization in at the junctional membrane region spans residues 1681–1700 (LQAGLRTLHDIGPEIRRAIS). Phosphoserine is present on residues Ser-1700 and Ser-1721. The tract at residues 1760–1797 (ISKAGNNQGDTESPSHEKLVDSTFTPSSYSSTGSNANI) is disordered. Positions 1781–1793 (STFTPSSYSSTGS) are enriched in polar residues. Residue Ser-1928 is modified to Phosphoserine; by PKA. Disordered stretches follow at residues 1971 to 2014 (RSHS…EKLN), 2026 to 2060 (SGEN…GRQF), and 2114 to 2155 (SGGA…PGCG). The span at 2130-2140 (NRRDPGRDRAG) shows a compositional bias: basic and acidic residues.

The protein belongs to the calcium channel alpha-1 subunit (TC 1.A.1.11) family. CACNA1C subfamily. Component of a calcium channel complex consisting of a pore-forming alpha subunit (CACNA1C) and ancillary beta, gamma and delta subunits. The channel complex contains alpha, beta, gamma and delta subunits in a 1:1:1:1 ratio, i.e. it contains only one of each type of subunit. CACNA1C channel activity is modulated by ancillary subunits, such as CACNB1, CACNB2, CACNB3, CACNA2D1 and CACNA2D4. Interacts with CACNB1. Interacts with CACNB2. Identified in a complex with CACNA2D4 and CACNB3. Interacts with CACNB3. Interacts with CACNA2D1. Interacts with the gamma subunits CACNG4, CACNG6, CACNG7 and CACNG8. Interacts with CACNA2D4. Interacts with CALM1. Interacts (via the N-terminus and the C-terminal C and IQ motifs) with CABP1; this inhibits Ca(2+)-dependent channel inactivation. The binding via the C motif is calcium independent whereas the binding via IQ requires the presence of calcium and is mutually exclusive with calmodulin binding. The binding to the cytoplasmic N-terminal domain is calcium independent but is essential for the channel modulation. Interacts (via C-terminal CDB motif) with CABP5; in a calcium-dependent manner. Interacts with CIB1; the interaction increases upon cardiomyocytes hypertrophy. Interacts with STAC1, STAC2 and STAC3; this inhibits channel inactivation, probably by hindering CALM1 binding. In terms of processing, phosphorylation by PKA at Ser-1928 activates the channel. Elevated levels of blood glucose lead to increased phosphorylation by PKA. Expression in cardiac muscle. In lung, expressed in airway and vascular smooth muscle cells.

The protein localises to the cell membrane. It localises to the sarcolemma. It is found in the perikaryon. The protein resides in the postsynaptic density membrane. Its subcellular location is the cell projection. The protein localises to the dendrite. It localises to the T-tubule. It catalyses the reaction Ca(2+)(in) = Ca(2+)(out). Inhibited by dihydropyridines (DHP), such as isradipine. Inhibited by nifedipine. Channel activity is regulated by Ca(2+) and calmodulin. Binding of STAC1, STAC2 or STAC3 to a region that overlaps with the calmodulin binding site inhibits channel inactivation by Ca(2+) and calmodulin. Binding of calmodulin or CABP1 at the same regulatory sites results in opposite effects on the channel function. Shear stress and pressure increases calcium channel activity. Functionally, pore-forming, alpha-1C subunit of the voltage-gated calcium channel that gives rise to L-type calcium currents. Mediates influx of calcium ions into the cytoplasm, and thereby triggers calcium release from the sarcoplasm. Plays an important role in excitation-contraction coupling in the heart. Required for normal heart development and normal regulation of heart rhythm. Required for normal contraction of smooth muscle cells in blood vessels and in the intestine. Essential for normal blood pressure regulation via its role in the contraction of arterial smooth muscle cells. Long-lasting (L-type) calcium channels belong to the 'high-voltage activated' (HVA) group. This chain is Voltage-dependent L-type calcium channel subunit alpha-1C (CACNA1C), found in Oryctolagus cuniculus (Rabbit).